We begin with the raw amino-acid sequence, 214 residues long: Germin-like protein 9-3 (214 aa).

An N-terminal signal peptide occupies residues 1 to 23; that stretch reads MASSILLLVVLAVVSAPVALVMA. 3 N-linked (GlcNAc...) asparagine glycosylation sites follow: N42, N60, and N69. In terms of domain architecture, Cupin type-1 spans 59 to 202; the sequence is MNMSMPMPNA…SFKTDVPTIQ (144 aa). Mn(2+)-binding residues include H104, H106, E111, and H150.

This sequence belongs to the germin family. Oligomer (believed to be a pentamer but probably hexamer).

It localises to the secreted. Its subcellular location is the extracellular space. The protein resides in the apoplast. Functionally, may play a role in plant defense. Probably has no oxalate oxidase activity even if the active site is conserved. This Oryza sativa subsp. japonica (Rice) protein is Germin-like protein 9-3.